A 262-amino-acid chain; its full sequence is Polyamine aminopropyltransferase (262 aa).

Residues 1–249 (MWITQEITPY…DIHRAAFALP (249 aa)) form the PABS domain. N29 contacts S-methyl-5'-thioadenosine. D83 contributes to the spermidine binding site. The active-site Proton acceptor is D155.

This sequence belongs to the spermidine/spermine synthase family. Homodimer or homotetramer.

The protein resides in the cytoplasm. It catalyses the reaction S-adenosyl 3-(methylsulfanyl)propylamine + putrescine = S-methyl-5'-thioadenosine + spermidine + H(+). It functions in the pathway amine and polyamine biosynthesis; spermidine biosynthesis; spermidine from putrescine: step 1/1. Functionally, catalyzes the irreversible transfer of a propylamine group from the amino donor S-adenosylmethioninamine (decarboxy-AdoMet) to putrescine (1,4-diaminobutane) to yield spermidine. In Helicobacter pylori (strain HPAG1), this protein is Polyamine aminopropyltransferase.